We begin with the raw amino-acid sequence, 102 residues long: NADH-quinone oxidoreductase subunit K (102 aa).

Helical transmembrane passes span 6–26, 30–50, and 65–85; these read MEHGLLLAAILFCIGLCGLLI, LLFILMSIEIMMNASALAFVV, and ILVISLAAAEASIGLALLLLL.

This sequence belongs to the complex I subunit 4L family. NDH-1 is composed of 14 different subunits. Subunits NuoA, H, J, K, L, M, N constitute the membrane sector of the complex.

It localises to the cell inner membrane. It carries out the reaction a quinone + NADH + 5 H(+)(in) = a quinol + NAD(+) + 4 H(+)(out). Functionally, NDH-1 shuttles electrons from NADH, via FMN and iron-sulfur (Fe-S) centers, to quinones in the respiratory chain. The immediate electron acceptor for the enzyme in this species is believed to be ubiquinone. Couples the redox reaction to proton translocation (for every two electrons transferred, four hydrogen ions are translocated across the cytoplasmic membrane), and thus conserves the redox energy in a proton gradient. The polypeptide is NADH-quinone oxidoreductase subunit K (Aeromonas salmonicida (strain A449)).